The chain runs to 483 residues: Glutamyl-tRNA(Gln) amidotransferase subunit A (483 aa).

Active-site charge relay system residues include lysine 76 and serine 151. Serine 175 (acyl-ester intermediate) is an active-site residue.

The protein belongs to the amidase family. GatA subfamily. As to quaternary structure, heterotrimer of A, B and C subunits.

It carries out the reaction L-glutamyl-tRNA(Gln) + L-glutamine + ATP + H2O = L-glutaminyl-tRNA(Gln) + L-glutamate + ADP + phosphate + H(+). Allows the formation of correctly charged Gln-tRNA(Gln) through the transamidation of misacylated Glu-tRNA(Gln) in organisms which lack glutaminyl-tRNA synthetase. The reaction takes place in the presence of glutamine and ATP through an activated gamma-phospho-Glu-tRNA(Gln). In Pseudomonas savastanoi pv. phaseolicola (strain 1448A / Race 6) (Pseudomonas syringae pv. phaseolicola (strain 1448A / Race 6)), this protein is Glutamyl-tRNA(Gln) amidotransferase subunit A.